The sequence spans 135 residues: P2Y purinoceptor 4 (135 aa).

Residues 1 to 25 (VHFSSSVMVLLFGLPFLVTLVCYGL) traverse the membrane as a helical segment. Topologically, residues 26-49 (MALRLCRPLPGAGQSSSRLRSLRT) are cytoplasmic. A helical membrane pass occupies residues 50-72 (IAVVMTVFAVCLVPFHITRTIYY). The Extracellular segment spans residues 73 to 90 (LARLLKADCQILNIVNVV). A helical transmembrane segment spans residues 91-112 (YKVTRPLASANSCLDPLLYLFT). The Cytoplasmic portion of the chain corresponds to 113–135 (GDKYRHQLQRLCRVSAPQRRITA).

Belongs to the G-protein coupled receptor 1 family. Expressed in brain, heart, stria vascularis and vestibular labyrinth.

It is found in the cell membrane. Functionally, receptor for ATP and UTP coupled to G-proteins that activate a phosphatidylinositol-calcium second messenger system. Not activated by UDP. In Meriones unguiculatus (Mongolian jird), this protein is P2Y purinoceptor 4 (P2RY4).